Reading from the N-terminus, the 1243-residue chain is Protein MMS22-like (1243 aa).

Belongs to the MMS22 family. MMS22L subfamily. Component of the MMS22L-TONSL complex, a complex at least composed of MMS22L and TONSL/NFKBIL2. Interacts with RAD51; interaction is direct. Degraded by the ubiquitin-proteasome system upon replication stress.

Its subcellular location is the nucleus. The protein resides in the chromosome. Component of the MMS22L-TONSL complex, a complex that promotes homologous recombination-mediated repair of double-strand breaks (DSBs) at stalled or collapsed replication forks. The MMS22L-TONSL complex is required to maintain genome integrity during DNA replication. It mediates the assembly of RAD51 filaments on single-stranded DNA (ssDNA): the MMS22L-TONSL complex is recruited to DSBs following histone replacement by histone chaperones and eviction of the replication protein A complex (RPA/RP-A) from DSBs. Following recruitment to DSBs, the TONSL-MMS22L complex promotes recruitment of RAD51 filaments and subsequent homologous recombination. Within the complex, MMS22L acts by binding ssDNA. This Homo sapiens (Human) protein is Protein MMS22-like.